We begin with the raw amino-acid sequence, 431 residues long: Trigger factor (431 aa).

One can recognise a PPIase FKBP-type domain in the interval 163 to 248 (GHFAVIDFTG…LSEIKVKELP (86 aa)).

The protein belongs to the FKBP-type PPIase family. Tig subfamily.

Its subcellular location is the cytoplasm. It catalyses the reaction [protein]-peptidylproline (omega=180) = [protein]-peptidylproline (omega=0). Functionally, involved in protein export. Acts as a chaperone by maintaining the newly synthesized protein in an open conformation. Functions as a peptidyl-prolyl cis-trans isomerase. The protein is Trigger factor of Geobacter sulfurreducens (strain ATCC 51573 / DSM 12127 / PCA).